The sequence spans 393 residues: Demethylspheroidene O-methyltransferase (393 aa).

Positions Met1 to Gln36 are disordered. Low complexity predominate over residues Val26–Gln36. 2 residues coordinate S-adenosyl-L-methionine: Asp259 and Arg297.

Belongs to the class I-like SAM-binding methyltransferase superfamily. Cation-independent O-methyltransferase family.

It carries out the reaction demethylspheroidene + S-adenosyl-L-methionine = spheroidene + S-adenosyl-L-homocysteine + H(+). It functions in the pathway carotenoid biosynthesis; spheroidene biosynthesis. Methyltransferase that mediates the O-methylation of 1-hydroxy carotenoids. Converts hydroxyneurosporene to methoxyneurosporene or demethylspheroidene to spheroidene. Also able to produce spirilloxanthin. This Rhodobacter capsulatus (strain ATCC BAA-309 / NBRC 16581 / SB1003) protein is Demethylspheroidene O-methyltransferase (crtF).